The following is a 170-amino-acid chain: Cysteine-rich uncharacterized protein 241L (170 aa).

This is Cysteine-rich uncharacterized protein 241L from Acheta domesticus (House cricket).